Consider the following 194-residue polypeptide: Xanthine phosphoribosyltransferase (194 aa).

Positions 20 and 27 each coordinate xanthine. 5-phospho-alpha-D-ribose 1-diphosphate is bound at residue 128-132 (ANGEA). Lys156 is a binding site for xanthine.

Belongs to the purine/pyrimidine phosphoribosyltransferase family. Xpt subfamily. Homodimer.

The protein resides in the cytoplasm. The enzyme catalyses XMP + diphosphate = xanthine + 5-phospho-alpha-D-ribose 1-diphosphate. The protein operates within purine metabolism; XMP biosynthesis via salvage pathway; XMP from xanthine: step 1/1. In terms of biological role, converts the preformed base xanthine, a product of nucleic acid breakdown, to xanthosine 5'-monophosphate (XMP), so it can be reused for RNA or DNA synthesis. The polypeptide is Xanthine phosphoribosyltransferase (Macrococcus caseolyticus (strain JCSC5402) (Macrococcoides caseolyticum)).